A 4116-amino-acid polypeptide reads, in one-letter code: Dynein axonemal heavy chain 3 (4116 aa).

Disordered regions lie at residues Met-1–Glu-68 and Val-137–Ser-172. Residues Met-1–Leu-1390 form a stem region. Positions Gly-145–Glu-156 are enriched in polar residues. Residues Asp-785–Glu-852 are a coiled coil. 4 AAA regions span residues Tyr-1391 to Ala-1612, Lys-1672 to Lys-1903, Lys-2036 to Gly-2284, and Glu-2395 to His-2646. Residues Gly-1429–Thr-1436, Gly-1710–Thr-1717, Gly-2074–Ser-2081, and Gly-2434–Gln-2441 contribute to the ATP site. The tract at residues Phe-2661–Cys-2960 is stalk. AAA stretches follow at residues Leu-3045–Glu-3275 and Val-3488–Met-3712.

It belongs to the dynein heavy chain family. Consists of at least two heavy chains and a number of intermediate and light chains. In terms of tissue distribution, expressed primarily in trachea and testis, 2 tissues containing axonemal structures. Also expressed in lung.

It is found in the cytoplasm. It localises to the cytoskeleton. Its subcellular location is the cilium axoneme. Its function is as follows. Force generating protein of respiratory cilia. Produces force towards the minus ends of microtubules. Dynein has ATPase activity; the force-producing power stroke is thought to occur on release of ADP. Involved in sperm motility; implicated in sperm flagellar assembly. The chain is Dynein axonemal heavy chain 3 (DNAH3) from Homo sapiens (Human).